Here is a 418-residue protein sequence, read N- to C-terminus: Type II methyltransferase M.MspI (418 aa).

The SAM-dependent MTase C5-type domain occupies 105–404 (FKFIDLFSGI…EQISLALKTV (300 aa)). Cysteine 174 is an active-site residue.

Belongs to the class I-like SAM-binding methyltransferase superfamily. C5-methyltransferase family.

It catalyses the reaction a 2'-deoxycytidine in DNA + S-adenosyl-L-methionine = a 5-methyl-2'-deoxycytidine in DNA + S-adenosyl-L-homocysteine + H(+). In terms of biological role, a methylase, recognizes the double-stranded sequence 5'-CCGG-3', methylates C-1 on both strands, and protects the DNA from cleavage by the MspI endonuclease. This chain is Type II methyltransferase M.MspI (mspIM), found in Moraxella sp.